The chain runs to 403 residues: Probable eukaryotic initiation factor 4A (403 aa).

The tract at residues 1–29 (MSQQDRVAPQDQDSFLDDQPGVRPIPSFD) is disordered. The short motif at 26–54 (PSFDDMPLHQNLLRGIYSYGFEKPSSIQQ) is the Q motif element. Positions 57 to 230 (IAPFTRGGDI…KKFMRDPVRI (174 aa)) constitute a Helicase ATP-binding domain. 70–77 (AQSGTGKT) provides a ligand contact to ATP. Residues 178-181 (DEAD) carry the DEAD box motif. Residues 241-401 (GIKQFFIAVE…ELPVDFAAYL (161 aa)) form the Helicase C-terminal domain.

It belongs to the DEAD box helicase family. eIF4A subfamily. EIF4F is a multi-subunit complex, the composition of which varies with external and internal environmental conditions. It is composed of at least EIF4A, EIF4E and EIF4G.

The enzyme catalyses ATP + H2O = ADP + phosphate + H(+). Functionally, ATP-dependent RNA helicase which is a subunit of the eIF4F complex involved in cap recognition and is required for mRNA binding to ribosome. In the current model of translation initiation, eIF4A unwinds RNA secondary structures in the 5'-UTR of mRNAs which is necessary to allow efficient binding of the small ribosomal subunit, and subsequent scanning for the initiator codon. The sequence is that of Probable eukaryotic initiation factor 4A from Leishmania braziliensis.